The chain runs to 138 residues: ATP synthase epsilon chain (138 aa).

This sequence belongs to the ATPase epsilon chain family. F-type ATPases have 2 components, CF(1) - the catalytic core - and CF(0) - the membrane proton channel. CF(1) has five subunits: alpha(3), beta(3), gamma(1), delta(1), epsilon(1). CF(0) has three main subunits: a, b and c.

It is found in the cell inner membrane. Produces ATP from ADP in the presence of a proton gradient across the membrane. The polypeptide is ATP synthase epsilon chain (Psychrobacter cryohalolentis (strain ATCC BAA-1226 / DSM 17306 / VKM B-2378 / K5)).